Here is a 729-residue protein sequence, read N- to C-terminus: Fatty acid oxidation complex subunit alpha (729 aa).

An enoyl-CoA hydratase/isomerase region spans residues 1–189 (MLYKGDTLYL…KIGLVDGVVK (189 aa)). D296 lines the substrate pocket. The interval 311–729 (ETPKQAAVLG…ARPVGSLKTA (419 aa)) is 3-hydroxyacyl-CoA dehydrogenase. NAD(+) contacts are provided by residues M324, D343, 400-402 (VVE), K407, and S429. H450 acts as the For 3-hydroxyacyl-CoA dehydrogenase activity in catalysis. Position 453 (N453) interacts with NAD(+). Substrate contacts are provided by N500 and Y660. Residues 707-729 (TRHNEPYYPPVEPARPVGSLKTA) form a disordered region.

It in the N-terminal section; belongs to the enoyl-CoA hydratase/isomerase family. The protein in the C-terminal section; belongs to the 3-hydroxyacyl-CoA dehydrogenase family. Heterotetramer of two alpha chains (FadB) and two beta chains (FadA).

It catalyses the reaction a (3S)-3-hydroxyacyl-CoA + NAD(+) = a 3-oxoacyl-CoA + NADH + H(+). The catalysed reaction is a (3S)-3-hydroxyacyl-CoA = a (2E)-enoyl-CoA + H2O. The enzyme catalyses a 4-saturated-(3S)-3-hydroxyacyl-CoA = a (3E)-enoyl-CoA + H2O. It carries out the reaction (3S)-3-hydroxybutanoyl-CoA = (3R)-3-hydroxybutanoyl-CoA. It catalyses the reaction a (3Z)-enoyl-CoA = a 4-saturated (2E)-enoyl-CoA. The catalysed reaction is a (3E)-enoyl-CoA = a 4-saturated (2E)-enoyl-CoA. It participates in lipid metabolism; fatty acid beta-oxidation. In terms of biological role, involved in the aerobic and anaerobic degradation of long-chain fatty acids via beta-oxidation cycle. Catalyzes the formation of 3-oxoacyl-CoA from enoyl-CoA via L-3-hydroxyacyl-CoA. It can also use D-3-hydroxyacyl-CoA and cis-3-enoyl-CoA as substrate. The polypeptide is Fatty acid oxidation complex subunit alpha (Salmonella typhi).